The following is a 97-amino-acid chain: Antitoxin TacA2 (97 aa).

It belongs to the TacA antitoxin family. Homodimer. Forms a complex with cognate toxin TacT2.

In terms of biological role, antitoxin component of a type II toxin-antitoxin (TA) system. Counteracts the toxic effect of cognate toxin TacT2. Functionally, the TacA2-TacT2 complex both represses and derepresses expression of its own operon. The polypeptide is Antitoxin TacA2 (Salmonella enteritidis).